Here is a 111-residue protein sequence, read N- to C-terminus: Beta-defensin 126 (111 aa).

The first 20 residues, 1–20, serve as a signal peptide directing secretion; sequence MKSLLFTLAVFMLLAQLVSG. An in vitro binds to LPS, mediates antimicrobial activity and inhibits LPS-mediated inflammation region spans residues 21-63; that stretch reads NWYVKKCLNDVGICKKKCKPEEMHVKNGWAMCGKQRDCCVPAD. 3 disulfide bridges follow: Cys-27-Cys-58, Cys-34-Cys-52, and Cys-38-Cys-59.

The protein belongs to the beta-defensin family. Homodimer or homooligomer; disulfide-linked. Post-translationally, O-glycosylated; glycans contain alpha(2,3)-linked sialic acids.

Its subcellular location is the secreted. In terms of biological role, highly glycosylated atypical beta-defensin involved in several aspects of sperm function. Facilitates sperm transport in the female reproductive tract and contributes to sperm protection against immunodetection; both functions are probably implicating the negative surface charge provided by its O-linked oligosaccharides in the sperm glycocalyx. Involved in binding of sperm to oviductal epithelial cells to form a sperm reservoir until ovulation. Release from the sperm surface during capacitation and ovaluation by an elevation of oviductal fluid pH is unmasking other surface components and allows sperm to penetrate the cumulus matrix and bind to the zona pellucida of the oocyte. In vitro has antimicrobial activity and may inhibit LPS-mediated inflammation. This Gorilla gorilla gorilla (Western lowland gorilla) protein is Beta-defensin 126 (DEFB126).